The chain runs to 479 residues: Glutamate--tRNA ligase (479 aa).

Positions 21-31 (PSPTGYLHVGG) match the 'HIGH' region motif. The 'KMSKS' region motif lies at 248-252 (KLSKR). Lys-251 serves as a coordination point for ATP.

This sequence belongs to the class-I aminoacyl-tRNA synthetase family. Glutamate--tRNA ligase type 1 subfamily. As to quaternary structure, monomer.

It is found in the cytoplasm. The enzyme catalyses tRNA(Glu) + L-glutamate + ATP = L-glutamyl-tRNA(Glu) + AMP + diphosphate. In terms of biological role, catalyzes the attachment of glutamate to tRNA(Glu) in a two-step reaction: glutamate is first activated by ATP to form Glu-AMP and then transferred to the acceptor end of tRNA(Glu). In Actinobacillus pleuropneumoniae serotype 5b (strain L20), this protein is Glutamate--tRNA ligase.